The following is a 458-amino-acid chain: Cytoplasmic tRNA 2-thiolation protein 2 (458 aa).

It belongs to the CTU2/NCS2 family.

The protein resides in the cytoplasm. It participates in tRNA modification; 5-methoxycarbonylmethyl-2-thiouridine-tRNA biosynthesis. Plays a central role in 2-thiolation of mcm(5)S(2)U at tRNA wobble positions of tRNA(Lys), tRNA(Glu) and tRNA(Gln). May act by forming a heterodimer with NCS6/CTU1 that ligates sulfur from thiocarboxylated URM1 onto the uridine of tRNAs at wobble position. This chain is Cytoplasmic tRNA 2-thiolation protein 2, found in Arabidopsis thaliana (Mouse-ear cress).